The chain runs to 182 residues: Dual-action ribosomal maturation protein DarP (182 aa).

The disordered stretch occupies residues 1–25 (MEENLADNSEREARPSKTKRKKEMH).

This sequence belongs to the DarP family.

The protein localises to the cytoplasm. Its function is as follows. Member of a network of 50S ribosomal subunit biogenesis factors which assembles along the 30S-50S interface, preventing incorrect 23S rRNA structures from forming. Promotes peptidyl transferase center (PTC) maturation. In Nitrosospira multiformis (strain ATCC 25196 / NCIMB 11849 / C 71), this protein is Dual-action ribosomal maturation protein DarP.